The following is a 473-amino-acid chain: Serine carboxypeptidase-like 25 (473 aa).

The signal sequence occupies residues 1–22; that stretch reads MAMAKLAIFTTLMAILVMTSQG. Residues N46 and N143 are each glycosylated (N-linked (GlcNAc...) asparagine). 3 disulfides stabilise this stretch: C92/C358, C252/C263, and C288/C326. Residue S185 is part of the active site. N-linked (GlcNAc...) asparagine glycosylation is found at N289, N299, N347, and N367. Catalysis depends on residues D395 and H447.

This sequence belongs to the peptidase S10 family. Ubiquitous.

The protein localises to the secreted. Functionally, probable carboxypeptidase. This is Serine carboxypeptidase-like 25 (SCPL25) from Arabidopsis thaliana (Mouse-ear cress).